The primary structure comprises 325 residues: Probable serine/threonine-protein phosphatase 2A activator 1 (325 aa).

It belongs to the PTPA-type PPIase family.

The protein localises to the cytoplasm. The enzyme catalyses [protein]-peptidylproline (omega=180) = [protein]-peptidylproline (omega=0). PPIases accelerate the folding of proteins. It catalyzes the cis-trans isomerization of proline imidic peptide bonds in oligopeptides. Acts as a regulatory subunit for PP2A-like phosphatases modulating their activity or substrate specificity, probably by inducing a conformational change in the catalytic subunit, a direct target of the PPIase. The polypeptide is Probable serine/threonine-protein phosphatase 2A activator 1 (ppp2r4A) (Dictyostelium discoideum (Social amoeba)).